Reading from the N-terminus, the 601-residue chain is Elongation factor 4 (601 aa).

Residues 7–189 (DRIRNFSIIA…ALVTRLPAPK (183 aa)) form the tr-type G domain. GTP contacts are provided by residues 19 to 24 (DHGKST) and 136 to 139 (NKVD).

This sequence belongs to the TRAFAC class translation factor GTPase superfamily. Classic translation factor GTPase family. LepA subfamily.

The protein localises to the cell inner membrane. It catalyses the reaction GTP + H2O = GDP + phosphate + H(+). In terms of biological role, required for accurate and efficient protein synthesis under certain stress conditions. May act as a fidelity factor of the translation reaction, by catalyzing a one-codon backward translocation of tRNAs on improperly translocated ribosomes. Back-translocation proceeds from a post-translocation (POST) complex to a pre-translocation (PRE) complex, thus giving elongation factor G a second chance to translocate the tRNAs correctly. Binds to ribosomes in a GTP-dependent manner. The chain is Elongation factor 4 from Granulibacter bethesdensis (strain ATCC BAA-1260 / CGDNIH1).